The primary structure comprises 370 residues: Chorismate synthase (370 aa).

Residues Arg48 and Arg54 each contribute to the NADP(+) site. FMN-binding positions include 130–132, 242–243, Gly287, 302–306, and Arg328; these read RSS, NA, and KPTSS.

Belongs to the chorismate synthase family. Homotetramer. Requires FMNH2 as cofactor.

The catalysed reaction is 5-O-(1-carboxyvinyl)-3-phosphoshikimate = chorismate + phosphate. The protein operates within metabolic intermediate biosynthesis; chorismate biosynthesis; chorismate from D-erythrose 4-phosphate and phosphoenolpyruvate: step 7/7. Catalyzes the anti-1,4-elimination of the C-3 phosphate and the C-6 proR hydrogen from 5-enolpyruvylshikimate-3-phosphate (EPSP) to yield chorismate, which is the branch point compound that serves as the starting substrate for the three terminal pathways of aromatic amino acid biosynthesis. This reaction introduces a second double bond into the aromatic ring system. In Xanthobacter autotrophicus (strain ATCC BAA-1158 / Py2), this protein is Chorismate synthase.